Reading from the N-terminus, the 94-residue chain is Cell division topological specificity factor (94 aa).

This sequence belongs to the MinE family.

Prevents the cell division inhibition by proteins MinC and MinD at internal division sites while permitting inhibition at polar sites. This ensures cell division at the proper site by restricting the formation of a division septum at the midpoint of the long axis of the cell. The protein is Cell division topological specificity factor of Hamiltonella defensa subsp. Acyrthosiphon pisum (strain 5AT).